A 945-amino-acid chain; its full sequence is MSLTTAAPLLALLRENQDSVKTYALESINNVVDQLWSEISNELPDIEALYDDDTFSDREMAALIASKVYYNLGEYESAVKYALAAKDRFDIDEKSQFVETIVSKSIEMYVQEASKQYTKDEQFYTKDIIDPKLTSIFERMIEKCLKASELKLALGIALEGYRLDIIESALKSKLDQDSTSENVKIINYLLTLAITTVTNSKFRSSILRKSFDFLMNMPNCDYLTLNKVVVNLNDAGLALQLFKKLKEENDEGLSAQIAFDLVSSASQQLLEILVTELTAQGYDPALLNILSGLPTCDYYNTFLLNNKNIDIGLLNKSKSSLDGKFSLFHTAVSVANGFMHAGTTDNSFIKANLPWLGKAQNWAKFTATASLGVIHKGNLLEGKKVMAPYLPGSRASSRFIKGGSLYGLGLIYAGFGRDTTDYLKNIIVENSGTSGDEDVDVLLHGASLGIGLAAMGSANIEVYEALKEVLYNDSATSGEAAALGMGLCMLGTGKPEAIHDMFTYSQETQHGNITRGLAVGLALINYGRQELADDLITKMLASDESLLRYGGAFTIALAYAGTGNNSAVKRLLHVAVSDSNDDVRRAAVIALGFVLLRDYTTVPRIVQLLSKSHNAHVRCGTAFALGIACAGKGLQSAIDVLDPLTKDPVDFVRQAAMIALSMILIQQTEKLNPQVADINKNFLSVITNKHQEGLAKFGACVAQGIMNAGGRNVTIQLENADTGTLDTKSVVGLVMFSQFWYWFPLAHFLSLSFTPTTVIGIRGSDQAIPKFQMNCYAKEDAFSYPRMYEEASGKEVEKVATAVLSTTARAKARAKKTKKEKGPNEEEKKKEHEEKEKERETNKKGIKETKENDEEFYKNKYSSKPYKVDNMTRILPQQSRYISFIKDDRFVPVRKFKGNNGVVVLRDREPKEPVALIETVRQMKDVNAPLPTPFKVDDNVDFPSA.

N-acetylserine is present on Ser2. PC repeat units follow at residues 366–399 (TATA…SSRF), 403–440 (GSLY…EDVD), 445–479 (GASL…TSGE), 480–514 (AAAL…GNIT), 516–549 (GLAV…LLRY), 550–585 (GGAF…DVRR), 586–618 (AAVI…AHVR), 620–654 (GTAF…FVRQ), 655–692 (AAMI…KHQE), and 698–734 (GACV…VGLV). Position 801 is a phosphothreonine (Thr801). The segment covering 810–819 (AKARAKKTKK) has biased composition (basic residues). The disordered stretch occupies residues 810 to 851 (AKARAKKTKKEKGPNEEEKKKEHEEKEKERETNKKGIKETKE). The segment covering 820 to 851 (EKGPNEEEKKKEHEEKEKERETNKKGIKETKE) has biased composition (basic and acidic residues). Phosphothreonine is present on Thr932.

This sequence belongs to the proteasome subunit S1 family. Interacts with UBR1. In terms of processing, N-acetylated by NAT1.

Its function is as follows. Acts as a regulatory subunit of the 26S proteasome which is involved in the ATP-dependent degradation of ubiquitinated proteins. In Saccharomyces cerevisiae (strain ATCC 204508 / S288c) (Baker's yeast), this protein is 26S proteasome regulatory subunit RPN2 (RPN2).